Reading from the N-terminus, the 192-residue chain is uncharacterized protein (192 aa).

The protein belongs to the IIV-6 358L family.

This is an uncharacterized protein from Aedes vexans (Inland floodwater mosquito).